The following is a 362-amino-acid chain: Serpentine receptor class epsilon-37 (362 aa).

7 consecutive transmembrane segments (helical) span residues 29–49, 67–87, 127–147, 170–190, 204–224, 260–280, and 288–308; these read IFYV…YILV, IMMC…IVLI, IYFA…AVLA, IPIL…YQTT, IFIG…NLAW, LVVS…VLLF, and FFVH…SLTL.

This sequence belongs to the nematode receptor-like protein sre family.

The protein localises to the membrane. This chain is Serpentine receptor class epsilon-37 (sre-37), found in Caenorhabditis elegans.